A 131-amino-acid polypeptide reads, in one-letter code: uncharacterized protein (131 aa).

Residues 64 to 81 (VNCDKCGKPGNVKNDCPG) form a CCHC-type; degenerate zinc finger.

This is an uncharacterized protein from Homo sapiens (Human).